Consider the following 210-residue polypeptide: V-type sodium ATPase subunit D (210 aa).

It belongs to the V-ATPase D subunit family.

Its function is as follows. Involved in ATP-driven sodium extrusion. This chain is V-type sodium ATPase subunit D (ntpD), found in Enterococcus hirae (strain ATCC 9790 / DSM 20160 / JCM 8729 / LMG 6399 / NBRC 3181 / NCIMB 6459 / NCDO 1258 / NCTC 12367 / WDCM 00089 / R).